The primary structure comprises 589 residues: Kelch-like protein 25 (589 aa).

One can recognise a BTB domain in the interval 46–114 (TDMTLWAGNR…AYSSKIIINE (69 aa)). Residues 149 to 250 (CLGMMILSDA…LPSELLKEAV (102 aa)) form the BACK domain. 6 Kelch repeats span residues 296–340 (TLLI…AIGC), 341–388 (KVYI…ELDN), 389–444 (CLYV…SAKL), 446–492 (LFVF…VLGS), 494–538 (IFIM…ASGN), and 539–585 (KVYV…STWK).

As to quaternary structure, component of the BCR(KLHL25) E3 ubiquitin ligase complex, at least composed of cul3, klhl25 and rbx1.

It functions in the pathway protein modification; protein ubiquitination. Substrate-specific adapter of a BCR (BTB-CUL3-RBX1) E3 ubiquitin ligase complex involved in various processes, such as translation homeostasis and lipid synthesis. The BCR(KLHL25) ubiquitin ligase complex acts by mediating ubiquitination of hypophosphorylated eif4ebp1 (4E-BP1): ubiquitination and subsequent degradation of hypophosphorylated EIF4EBP1 (4E-BP1) probably serves as a homeostatic mechanism to maintain translation and prevent eIF4E inhibition when eIF4E levels are low. The BCR(KLHL25) complex also acts as a regulator of lipid synthesis by mediating ubiquitination and degradation of ACLY, thereby inhibiting lipid synthesis. This is Kelch-like protein 25 from Xenopus laevis (African clawed frog).